Consider the following 154-residue polypeptide: Decarboxylase claH (154 aa).

This sequence belongs to the tpcK family.

The catalysed reaction is atrochrysone carboxylate + H(+) = atrochrysone + CO2. Its pathway is pigment biosynthesis. Its function is as follows. Decarboxylase involved in the biosynthesis of the bianthraquinone cladofulvin, a conidial pigment not required for virulence but that plays a role in fitness and resistance to environmental stresses including UV light and low-temperature stress. The pathway begins with the synthesis of atrochrysone thioester by the polyketide synthase (PKS) claG. The atrochrysone carboxyl ACP thioesterase claF then breaks the thioester bond and releases the atrochrysone carboxylic acid from claG. This compound is decarboxylated by claH to yield emodin, which is further converted to chrysophanol hydroquinone by the reductase claC and the dehydratase claB. The cytochrome monooxygenase P450 claM then catalyzes the dimerization of nataloe-emodin to cladofulvin. This chain is Decarboxylase claH, found in Passalora fulva (Tomato leaf mold).